The primary structure comprises 56 residues: UPF0391 membrane protein Bd1438 (56 aa).

2 consecutive transmembrane segments (helical) span residues 4–24 (AAIA…SGVA) and 33–53 (ILLF…LVSG).

Belongs to the UPF0391 family.

The protein resides in the cell membrane. This Bdellovibrio bacteriovorus (strain ATCC 15356 / DSM 50701 / NCIMB 9529 / HD100) protein is UPF0391 membrane protein Bd1438.